A 156-amino-acid chain; its full sequence is Lipoprotein signal peptidase (156 aa).

A run of 2 helical transmembrane segments spans residues 52-72 and 85-105; these read ILEG…IGIV and FATA…DRIF. Catalysis depends on residues Asp-111 and Asp-129. A helical membrane pass occupies residues 121–141; the sequence is NFPIFNVADSALCVGVGILFL.

Belongs to the peptidase A8 family.

The protein localises to the cell membrane. The enzyme catalyses Release of signal peptides from bacterial membrane prolipoproteins. Hydrolyzes -Xaa-Yaa-Zaa-|-(S,diacylglyceryl)Cys-, in which Xaa is hydrophobic (preferably Leu), and Yaa (Ala or Ser) and Zaa (Gly or Ala) have small, neutral side chains.. The protein operates within protein modification; lipoprotein biosynthesis (signal peptide cleavage). This protein specifically catalyzes the removal of signal peptides from prolipoproteins. The sequence is that of Lipoprotein signal peptidase from Halalkalibacterium halodurans (strain ATCC BAA-125 / DSM 18197 / FERM 7344 / JCM 9153 / C-125) (Bacillus halodurans).